Consider the following 934-residue polypeptide: Serine/threonine-protein kinase atg1 (934 aa).

The region spanning 22-328 is the Protein kinase domain; it reads YTRLDEIGRG…SDFFDCDTIT (307 aa). ATP-binding positions include 28–36 and K51; that span reads IGRGSFATV. Catalysis depends on D165, which acts as the Proton acceptor. Disordered stretches follow at residues 335–432, 462–481, 531–580, 684–703, 800–822, and 878–900; these read IADD…PRRP, RNTYAGVPQTEKQAEKTKEE, RRPG…YGQS, TDPSGRANVPGGERDSTDLT, RLPPDHPSHPSNHSVGPSVGSGA, and EEEEVSRSEPGSGTDRGDARRDG. Polar residues predominate over residues 340 to 368; that stretch reads PSTSRRSSVAVNTSGSTSRPQSRTGSRTP. The span at 371–386 shows a compositional bias: basic and acidic residues; that stretch reads MKREKDASYPGKKDDQ. The span at 538 to 550 shows a compositional bias: low complexity; the sequence is SSTATATSPLATT. Basic and acidic residues predominate over residues 561–577; the sequence is ARADSTHTRQGSYERRY.

The protein belongs to the protein kinase superfamily. Ser/Thr protein kinase family. APG1/unc-51/ULK1 subfamily. Homodimer. Forms a ternary complex with ATG13 and ATG17.

It localises to the cytoplasm. The protein resides in the preautophagosomal structure membrane. The enzyme catalyses L-seryl-[protein] + ATP = O-phospho-L-seryl-[protein] + ADP + H(+). The catalysed reaction is L-threonyl-[protein] + ATP = O-phospho-L-threonyl-[protein] + ADP + H(+). Serine/threonine protein kinase involved in the cytoplasm to vacuole transport (Cvt) and found to be essential in autophagy, where it is required for the formation of autophagosomes. Involved in the clearance of protein aggregates which cannot be efficiently cleared by the proteasome. Required for selective autophagic degradation of the nucleus (nucleophagy) as well as for mitophagy which contributes to regulate mitochondrial quantity and quality by eliminating the mitochondria to a basal level to fulfill cellular energy requirements and preventing excess ROS production. Also involved in endoplasmic reticulum-specific autophagic process, in selective removal of ER-associated degradation (ERAD) substrates. Plays a key role in ATG9 and ATG23 cycling through the pre-autophagosomal structure and is necessary to promote ATG18 binding to ATG9 through phosphorylation of ATG9. Catalyzes phosphorylation of ATG4, decreasing the interaction between ATG4 and ATG8 and impairing deconjugation of PE-conjugated forms of ATG8. Required for conidiation and development of aerial hyphae. This chain is Serine/threonine-protein kinase atg1, found in Aspergillus oryzae (strain ATCC 42149 / RIB 40) (Yellow koji mold).